A 358-amino-acid chain; its full sequence is Biotin synthase (358 aa).

Residues 47–306 enclose the Radical SAM core domain; that stretch reads KNNSKIKLCA…ALYKIIMPYA (260 aa). Cys65, Cys69, and Cys72 together coordinate [4Fe-4S] cluster. [2Fe-2S] cluster-binding residues include Ser142, Cys174, Cys233, and Arg309.

The protein belongs to the radical SAM superfamily. Biotin synthase family. Homodimer. [4Fe-4S] cluster is required as a cofactor. Requires [2Fe-2S] cluster as cofactor.

It catalyses the reaction (4R,5S)-dethiobiotin + (sulfur carrier)-SH + 2 reduced [2Fe-2S]-[ferredoxin] + 2 S-adenosyl-L-methionine = (sulfur carrier)-H + biotin + 2 5'-deoxyadenosine + 2 L-methionine + 2 oxidized [2Fe-2S]-[ferredoxin]. It participates in cofactor biosynthesis; biotin biosynthesis; biotin from 7,8-diaminononanoate: step 2/2. Catalyzes the conversion of dethiobiotin (DTB) to biotin by the insertion of a sulfur atom into dethiobiotin via a radical-based mechanism. The protein is Biotin synthase of Methanocaldococcus jannaschii (strain ATCC 43067 / DSM 2661 / JAL-1 / JCM 10045 / NBRC 100440) (Methanococcus jannaschii).